Consider the following 216-residue polypeptide: GTP cyclohydrolase 1 (216 aa).

Cysteine 108, histidine 111, and cysteine 179 together coordinate Zn(2+).

This sequence belongs to the GTP cyclohydrolase I family. Toroid-shaped homodecamer, composed of two pentamers of five dimers.

It carries out the reaction GTP + H2O = 7,8-dihydroneopterin 3'-triphosphate + formate + H(+). It functions in the pathway cofactor biosynthesis; 7,8-dihydroneopterin triphosphate biosynthesis; 7,8-dihydroneopterin triphosphate from GTP: step 1/1. The sequence is that of GTP cyclohydrolase 1 from Shewanella oneidensis (strain ATCC 700550 / JCM 31522 / CIP 106686 / LMG 19005 / NCIMB 14063 / MR-1).